A 276-amino-acid polypeptide reads, in one-letter code: Adenylate kinase (276 aa).

51–56 (GAGKGT) lines the ATP pocket. Positions 71–100 (ATGDMLRSQVAKKTPLGQAAKKIMDAGGLV) are NMP. AMP contacts are provided by residues T72, R77, 98-100 (GLV), 127-130 (GFPR), and Q134. The segment at 168–205 (GRLVHPASGRSYHVKFNPPKKEMTDDITGEPLIQRSDD) is LID. ATP contacts are provided by residues R169 and 178 to 179 (SY). AMP is bound by residues R202 and R213. ATP is bound at residue Q241.

It belongs to the adenylate kinase family. AK2 subfamily. In terms of assembly, monomer.

Its subcellular location is the cytoplasm. It localises to the cytosol. The protein localises to the mitochondrion intermembrane space. It catalyses the reaction AMP + ATP = 2 ADP. In terms of biological role, catalyzes the reversible transfer of the terminal phosphate group between ATP and AMP. Plays an important role in cellular energy homeostasis and in adenine nucleotide metabolism. Adenylate kinase activity is critical for regulation of the phosphate utilization and the AMP de novo biosynthesis pathways. This is Adenylate kinase from Podospora anserina (strain S / ATCC MYA-4624 / DSM 980 / FGSC 10383) (Pleurage anserina).